Consider the following 382-residue polypeptide: uncharacterized protein (382 aa).

This is an uncharacterized protein from Frog virus 3 (isolate Goorha) (FV-3).